Here is a 158-residue protein sequence, read N- to C-terminus: S-ribosylhomocysteine lyase (158 aa).

H54, H58, and C124 together coordinate Fe cation.

This sequence belongs to the LuxS family. Homodimer. Requires Fe cation as cofactor.

It carries out the reaction S-(5-deoxy-D-ribos-5-yl)-L-homocysteine = (S)-4,5-dihydroxypentane-2,3-dione + L-homocysteine. In terms of biological role, involved in the synthesis of autoinducer 2 (AI-2) which is secreted by bacteria and is used to communicate both the cell density and the metabolic potential of the environment. The regulation of gene expression in response to changes in cell density is called quorum sensing. Catalyzes the transformation of S-ribosylhomocysteine (RHC) to homocysteine (HC) and 4,5-dihydroxy-2,3-pentadione (DPD). The sequence is that of S-ribosylhomocysteine lyase from Limosilactobacillus reuteri (strain DSM 20016) (Lactobacillus reuteri).